The chain runs to 374 residues: Peptide chain release factor 2 (374 aa).

At Gln250 the chain carries N5-methylglutamine.

Belongs to the prokaryotic/mitochondrial release factor family. Post-translationally, methylated by PrmC. Methylation increases the termination efficiency of RF2.

The protein localises to the cytoplasm. Peptide chain release factor 2 directs the termination of translation in response to the peptide chain termination codons UGA and UAA. This chain is Peptide chain release factor 2, found in Beutenbergia cavernae (strain ATCC BAA-8 / DSM 12333 / CCUG 43141 / JCM 11478 / NBRC 16432 / NCIMB 13614 / HKI 0122).